Consider the following 133-residue polypeptide: Holo-[acyl-carrier-protein] synthase (133 aa).

2 residues coordinate Mg(2+): aspartate 8 and glutamate 57.

The protein belongs to the P-Pant transferase superfamily. AcpS family. Mg(2+) serves as cofactor.

Its subcellular location is the cytoplasm. The enzyme catalyses apo-[ACP] + CoA = holo-[ACP] + adenosine 3',5'-bisphosphate + H(+). In terms of biological role, transfers the 4'-phosphopantetheine moiety from coenzyme A to a Ser of acyl-carrier-protein. The sequence is that of Holo-[acyl-carrier-protein] synthase from Bartonella quintana (strain Toulouse) (Rochalimaea quintana).